Reading from the N-terminus, the 246-residue chain is tRNA (guanine-N(7)-)-methyltransferase (246 aa).

S-adenosyl-L-methionine contacts are provided by E76, E101, D128, and D151. The active site involves D151. K155 is a substrate binding site. The segment at 157-162 is interaction with RNA; sequence RHNKRR. Residues D187 and 222 to 225 each bind substrate; that span reads TKFE.

Belongs to the class I-like SAM-binding methyltransferase superfamily. TrmB family.

The enzyme catalyses guanosine(46) in tRNA + S-adenosyl-L-methionine = N(7)-methylguanosine(46) in tRNA + S-adenosyl-L-homocysteine. It functions in the pathway tRNA modification; N(7)-methylguanine-tRNA biosynthesis. In terms of biological role, catalyzes the formation of N(7)-methylguanine at position 46 (m7G46) in tRNA. This is tRNA (guanine-N(7)-)-methyltransferase from Dechloromonas aromatica (strain RCB).